We begin with the raw amino-acid sequence, 338 residues long: Oligopeptide transport ATP-binding protein OppD (338 aa).

Positions 7 to 257 (LEAKQVSVAF…PKHPYTRSLL (251 aa)) constitute an ABC transporter domain. Position 43-50 (43-50 (GESGSGKS)) interacts with ATP.

This sequence belongs to the ABC transporter superfamily. In terms of assembly, the complex is composed of two ATP-binding proteins (OppD and OppF), two transmembrane proteins (OppB and OppC) and a solute-binding protein (OppA).

The protein resides in the cell membrane. The catalysed reaction is a [peptide](out) + ATP + H2O = a [peptide](in) + ADP + phosphate + H(+). Functionally, part of the ABC transporter complex OppABCDF involved in the uptake of oligopeptides. Probably responsible for energy coupling to the transport system. Essential for uptake of peptides larger than three amino acids and for growth in milk. The polypeptide is Oligopeptide transport ATP-binding protein OppD (Lactococcus lactis subsp. cremoris (strain SK11)).